Here is a 149-residue protein sequence, read N- to C-terminus: Large ribosomal subunit protein bL9 (149 aa).

Belongs to the bacterial ribosomal protein bL9 family.

Its function is as follows. Binds to the 23S rRNA. The protein is Large ribosomal subunit protein bL9 of Vibrio vulnificus (strain CMCP6).